A 214-amino-acid chain; its full sequence is Large ribosomal subunit protein uL3 (214 aa).

Polar residues predominate over residues 132 to 145; that stretch reads SNRASHGNSVTTRA. Positions 132–155 are disordered; sequence SNRASHGNSVTTRAPGSIGQAQDP. The residue at position 153 (Q153) is an N5-methylglutamine.

The protein belongs to the universal ribosomal protein uL3 family. In terms of assembly, part of the 50S ribosomal subunit. Forms a cluster with proteins L14 and L19. In terms of processing, methylated by PrmB.

Its function is as follows. One of the primary rRNA binding proteins, it binds directly near the 3'-end of the 23S rRNA, where it nucleates assembly of the 50S subunit. This Laribacter hongkongensis (strain HLHK9) protein is Large ribosomal subunit protein uL3.